A 580-amino-acid polypeptide reads, in one-letter code: V-type proton ATPase catalytic subunit A (580 aa).

Position 209 to 216 (209 to 216 (GAFGCGKT)) interacts with ATP.

Belongs to the ATPase alpha/beta chains family. As to quaternary structure, V-ATPase is a heteromultimeric enzyme composed of a peripheral catalytic V1 complex (main components: subunits A, B, C, D, E, and F) attached to an integral membrane V0 proton pore complex (main component: the proteolipid protein).

The catalysed reaction is ATP + H2O + 4 H(+)(in) = ADP + phosphate + 5 H(+)(out). Catalytic subunit of the peripheral V1 complex of vacuolar ATPase. V-ATPase vacuolar ATPase is responsible for acidifying a variety of intracellular compartments in eukaryotic cells. This is V-type proton ATPase catalytic subunit A from Hordeum vulgare (Barley).